The primary structure comprises 333 residues: Electron transfer flavoprotein subunit alpha, mitochondrial (333 aa).

Residues 1 to 19 constitute a mitochondrion transit peptide; the sequence is MFRAAAPGQLRRATSLLRF. Residues 20–204 are domain I; it reads QSTLVIAEHA…GISEWLDQKL (185 aa). Lysine 59 is subject to N6-acetyllysine; alternate. Lysine 59 bears the N6-succinyllysine; alternate mark. Lysine 62 carries the N6-acetyllysine modification. At lysine 69 the chain carries N6-acetyllysine; alternate. An N6-succinyllysine; alternate modification is found at lysine 69. Lysine 75 is subject to N6-acetyllysine. Lysine 85 carries the N6-acetyllysine; alternate modification. The residue at position 85 (lysine 85) is an N6-succinyllysine; alternate. At threonine 93 the chain carries Phosphothreonine. N6-acetyllysine occurs at positions 101 and 139. Serine 140 bears the Phosphoserine mark. An N6-acetyllysine; alternate modification is found at lysine 158. Residue lysine 158 is modified to N6-succinyllysine; alternate. Position 164 is an N6-acetyllysine (lysine 164). N6-succinyllysine is present on lysine 187. The residue at position 203 (lysine 203) is an N6-acetyllysine; alternate. The residue at position 203 (lysine 203) is an N6-succinyllysine; alternate. The interval 205 to 333 is domain II; sequence TKSDRPELTG…PEMTELLKKK (129 aa). Residue lysine 216 is modified to N6-succinyllysine. Arginine 223 is a binding site for FAD. N6-acetyllysine; alternate is present on residues lysine 226 and lysine 232. Lysine 226 and lysine 232 each carry N6-succinyllysine; alternate. Residues serine 248, 263-266, 281-286, and asparagine 300 each bind FAD; these read VGQT and SGAIQH. Lysine 301 carries the post-translational modification N6-succinyllysine. 318–319 lines the FAD pocket; sequence DL.

The protein belongs to the ETF alpha-subunit/FixB family. As to quaternary structure, heterodimer composed of ETFA and ETFB. Identified in a complex that contains ETFA, ETFB and ETFRF1. Interaction with ETFRF1 promotes dissociation of the bound FAD and loss of electron transfer activity. Interacts with TASOR. FAD is required as a cofactor.

Its subcellular location is the mitochondrion matrix. Its function is as follows. Heterodimeric electron transfer flavoprotein that accepts electrons from several mitochondrial dehydrogenases, including acyl-CoA dehydrogenases, glutaryl-CoA and sarcosine dehydrogenase. It transfers the electrons to the main mitochondrial respiratory chain via ETF-ubiquinone oxidoreductase (ETF dehydrogenase). Required for normal mitochondrial fatty acid oxidation and normal amino acid metabolism. The protein is Electron transfer flavoprotein subunit alpha, mitochondrial (ETFA) of Bos taurus (Bovine).